Reading from the N-terminus, the 273-residue chain is Formamidopyrimidine-DNA glycosylase (273 aa).

Catalysis depends on Pro-2, which acts as the Schiff-base intermediate with DNA. The Proton donor role is filled by Glu-3. The active-site Proton donor; for beta-elimination activity is Lys-57. DNA is bound by residues His-91, Arg-110, and Lys-151. Residues 236–270 form an FPG-type zinc finger; it reads QVYGRKGEACNDCGTIIEAKVIGQRNSYFCPHCQI. Arg-260 functions as the Proton donor; for delta-elimination activity in the catalytic mechanism.

It belongs to the FPG family. Monomer. Requires Zn(2+) as cofactor.

The enzyme catalyses Hydrolysis of DNA containing ring-opened 7-methylguanine residues, releasing 2,6-diamino-4-hydroxy-5-(N-methyl)formamidopyrimidine.. It catalyses the reaction 2'-deoxyribonucleotide-(2'-deoxyribose 5'-phosphate)-2'-deoxyribonucleotide-DNA = a 3'-end 2'-deoxyribonucleotide-(2,3-dehydro-2,3-deoxyribose 5'-phosphate)-DNA + a 5'-end 5'-phospho-2'-deoxyribonucleoside-DNA + H(+). Functionally, involved in base excision repair of DNA damaged by oxidation or by mutagenic agents. Acts as a DNA glycosylase that recognizes and removes damaged bases. Has a preference for oxidized purines, such as 7,8-dihydro-8-oxoguanine (8-oxoG). Has AP (apurinic/apyrimidinic) lyase activity and introduces nicks in the DNA strand. Cleaves the DNA backbone by beta-delta elimination to generate a single-strand break at the site of the removed base with both 3'- and 5'-phosphates. This is Formamidopyrimidine-DNA glycosylase from Actinobacillus pleuropneumoniae serotype 7 (strain AP76).